A 260-amino-acid chain; its full sequence is MIVVKIGGSVVCKDPTKVVENLPNYADKAVVVHGGGCLVNDLLKRMGVEPKFLTHPGGLVSRYTDLETLKVFVMAMSWINKSIVASLHALGVEALGLTGADLGVVKARRKEKVLVVDERGRQRVVDGGYVGRVVDIAVDKLRPPPLKVLSPVAVSERGELLNIDGDQLAFDVAKRLGAERLVLLSDVDGLIIGGSVVPRLTAAQAEELVKNEEVRGGMKRKLLMAAEAAKLGLEVVISNGLVDKPIDAALSGRGTHVVKG.

Substrate-binding positions include 35-36 (GG), arginine 62, and asparagine 162.

It belongs to the acetylglutamate kinase family. LysZ subfamily.

The protein localises to the cytoplasm. The enzyme catalyses [amino-group carrier protein]-C-terminal-N-(1,4-dicarboxybutan-1-yl)-L-glutamine + ATP = [amino-group carrier protein]-C-terminal-N-(1-carboxy-5-phosphooxy-5-oxopentan-1-yl)-L-glutamine + ADP. It catalyses the reaction [amino-group carrier protein]-C-terminal-gamma-(L-glutamyl)-L-glutamate + ATP = [amino-group carrier protein]-C-terminal-gamma-(5-phospho-L-glutamyl)-L-glutamate + ADP. It functions in the pathway amino-acid biosynthesis; L-lysine biosynthesis via AAA pathway; L-lysine from L-alpha-aminoadipate (Thermus route): step 2/5. Its pathway is amino-acid biosynthesis; L-arginine biosynthesis. Involved in both the arginine and lysine biosynthetic pathways. Phosphorylates the LysW-bound precursors glutamate (for arginine biosynthesis), respectively alpha-aminoadipate (for lysine biosynthesis). The sequence is that of Putative [LysW]-aminoadipate/[LysW]-glutamate kinase from Pyrobaculum neutrophilum (strain DSM 2338 / JCM 9278 / NBRC 100436 / V24Sta) (Thermoproteus neutrophilus).